Here is a 101-residue protein sequence, read N- to C-terminus: DNA-binding protein Fis (101 aa).

The H-T-H motif DNA-binding region spans 77–96; sequence QTRAANMLGINRGTLRKKLK.

It belongs to the transcriptional regulatory Fis family. As to quaternary structure, homodimer.

In terms of biological role, activates ribosomal RNA transcription. Plays a direct role in upstream activation of rRNA promoters. The sequence is that of DNA-binding protein Fis from Shewanella denitrificans (strain OS217 / ATCC BAA-1090 / DSM 15013).